A 312-amino-acid chain; its full sequence is R2-like ligand binding oxidase (312 aa).

E68, E101, and H104 together coordinate Mn(2+). The 3-(O4'-tyrosyl)-valine (Val-Tyr) cross-link spans 71–162; that stretch reads VTQDIQPFMA…AAQVRASATY (92 aa). A Fe cation-binding site is contributed by E101. The Fe cation site is built by E167, E202, and H205.

This sequence belongs to the ribonucleoside diphosphate reductase small chain family. R2-like ligand binding oxidase subfamily. Homodimer. Requires Fe cation as cofactor. The cofactor is Mn(2+).

In terms of biological role, probable oxidase that might be involved in lipid metabolism. The chain is R2-like ligand binding oxidase from Mycobacterium sp. (strain KMS).